A 397-amino-acid polypeptide reads, in one-letter code: Tryptophan synthase beta chain (397 aa).

K88 is modified (N6-(pyridoxal phosphate)lysine).

Belongs to the TrpB family. In terms of assembly, tetramer of two alpha and two beta chains. Pyridoxal 5'-phosphate serves as cofactor.

The enzyme catalyses (1S,2R)-1-C-(indol-3-yl)glycerol 3-phosphate + L-serine = D-glyceraldehyde 3-phosphate + L-tryptophan + H2O. Its pathway is amino-acid biosynthesis; L-tryptophan biosynthesis; L-tryptophan from chorismate: step 5/5. In terms of biological role, the beta subunit is responsible for the synthesis of L-tryptophan from indole and L-serine. This is Tryptophan synthase beta chain from Haemophilus influenzae (strain 86-028NP).